A 122-amino-acid chain; its full sequence is Large ribosomal subunit protein uL14 (122 aa).

This sequence belongs to the universal ribosomal protein uL14 family. In terms of assembly, part of the 50S ribosomal subunit. Forms a cluster with proteins L3 and L19. In the 70S ribosome, L14 and L19 interact and together make contacts with the 16S rRNA in bridges B5 and B8.

Its function is as follows. Binds to 23S rRNA. Forms part of two intersubunit bridges in the 70S ribosome. The polypeptide is Large ribosomal subunit protein uL14 (Carboxydothermus hydrogenoformans (strain ATCC BAA-161 / DSM 6008 / Z-2901)).